Consider the following 357-residue polypeptide: Tetraacyldisaccharide 4'-kinase (357 aa).

54–61 lines the ATP pocket; it reads TVGGAGKT.

Belongs to the LpxK family.

It catalyses the reaction a lipid A disaccharide + ATP = a lipid IVA + ADP + H(+). The protein operates within glycolipid biosynthesis; lipid IV(A) biosynthesis; lipid IV(A) from (3R)-3-hydroxytetradecanoyl-[acyl-carrier-protein] and UDP-N-acetyl-alpha-D-glucosamine: step 6/6. Transfers the gamma-phosphate of ATP to the 4'-position of a tetraacyldisaccharide 1-phosphate intermediate (termed DS-1-P) to form tetraacyldisaccharide 1,4'-bis-phosphate (lipid IVA). The chain is Tetraacyldisaccharide 4'-kinase from Rhizobium leguminosarum bv. trifolii (strain WSM2304).